The chain runs to 470 residues: FAD-dependent monooxygenase SAT7 (470 aa).

Residues 28–48 traverse the membrane as a helical segment; it reads GLSVAIVGGGIVGIALALGLV. The FAD site is built by glutamate 58, alanine 71, and arginine 143. Catalysis depends on residues arginine 227 and tyrosine 260. 2 residues coordinate FAD: aspartate 351 and alanine 364.

This sequence belongs to the paxM FAD-dependent monooxygenase family. It depends on FAD as a cofactor.

Its subcellular location is the membrane. It functions in the pathway mycotoxin biosynthesis. Functionally, FAD-dependent monooxygenase; part of the satratoxin SC1 cluster involved in the biosynthesis of satratoxins, trichothecene mycotoxins that are associated with human food poisonings. Satratoxins are suggested to be made by products of multiple gene clusters (SC1, SC2 and SC3) that encode 21 proteins in all, including polyketide synthases, acetyltransferases, and other enzymes expected to modify the trichothecene skeleton. SC1 encodes 10 proteins, SAT1 to SAT10. The largest are SAT8, which encodes a putative polyketide synthase (PKS) with a conventional non-reducing architecture, and SAT10, a putative protein containing four ankyrin repeats and thus may be involved in protein scaffolding. The putative short-chain reductase SAT3 may assist the PKS in some capacity. SAT6 contains a secretory lipase domain and acts probably as a trichothecene esterase. SAT5 encodes a putative acetyltransferase, and so, with SAT6, may affect endogenous protection from toxicity. The probable transcription factor SAT9 may regulate the expression of the SC1 cluster. SC2 encodes proteins SAT11 to SAT16, the largest of which encodes the putative reducing PKS SAT13. SAT11 is a cytochrome P450 monooxygenase, while SAT14 and SAT16 are probable acetyltransferases. The SC2 cluster may be regulated by the transcription factor SAT15. SC3 is a small cluster that encodes 5 proteins, SAT17 to SAT21. SAT21 is a putative MFS-type transporter which may have a role in exporting secondary metabolites. The four other proteins putatively encoded in SC3 include the taurine hydroxylase-like protein SAT17, the O-methyltransferase SAT18, the acetyltransferase SAT19, and the Cys6-type zinc finger SAT20, the latter being probably involved in regulation of SC3 expression. The sequence is that of FAD-dependent monooxygenase SAT7 from Stachybotrys chartarum (strain CBS 109288 / IBT 7711) (Toxic black mold).